Here is a 368-residue protein sequence, read N- to C-terminus: Glycolate oxidase 2 (368 aa).

Residues 1 to 360 (MALVTNVCEY…TRGHVVTESD (360 aa)) form the FMN hydroxy acid dehydrogenase domain. Residues 78–80 (PTA), S107, 128–130 (QLS), and T156 contribute to the FMN site. A glyoxylate-binding site is contributed by R165. 2 residues coordinate FMN: K231 and S253. Glyoxylate-binding residues include H255 and R258. The active-site Proton acceptor is H255. Residues 286–290 (DSGFR) and 309–310 (GR) contribute to the FMN site. The Microbody targeting signal motif lies at 366 to 368 (SRL).

The protein belongs to the FMN-dependent alpha-hydroxy acid dehydrogenase family. Homotetramer. FMN is required as a cofactor.

It localises to the peroxisome. The enzyme catalyses glycolate + O2 = glyoxylate + H2O2. The protein operates within photosynthesis; photorespiration; glycine from 2-phosphoglycolate: step 2/3. Catalyzes the oxidation of glycolate to glyoxylate, with a reduction of O2 to H2O2. Is a key enzyme in photorespiration in green plants. This is Glycolate oxidase 2 (GLO2) from Oryza sativa subsp. indica (Rice).